Consider the following 201-residue polypeptide: Small ribosomal subunit protein uS4 (201 aa).

In terms of domain architecture, S4 RNA-binding spans serine 91–glutamate 155.

Belongs to the universal ribosomal protein uS4 family. As to quaternary structure, part of the 30S ribosomal subunit. Contacts protein S5. The interaction surface between S4 and S5 is involved in control of translational fidelity.

One of the primary rRNA binding proteins, it binds directly to 16S rRNA where it nucleates assembly of the body of the 30S subunit. Functionally, with S5 and S12 plays an important role in translational accuracy. The chain is Small ribosomal subunit protein uS4 from Rhodococcus jostii (strain RHA1).